Consider the following 162-residue polypeptide: Cyanate hydratase (162 aa).

Active-site residues include Arg-103, Glu-106, and Ser-129.

Belongs to the cyanase family.

It carries out the reaction cyanate + hydrogencarbonate + 3 H(+) = NH4(+) + 2 CO2. Catalyzes the reaction of cyanate with bicarbonate to produce ammonia and carbon dioxide. The sequence is that of Cyanate hydratase from Phaeosphaeria nodorum (strain SN15 / ATCC MYA-4574 / FGSC 10173) (Glume blotch fungus).